The chain runs to 1040 residues: Multidrug resistance protein MdtB (1040 aa).

12 consecutive transmembrane segments (helical) span residues 25–45 (LLMV…PVAA), 342–362 (DTQF…YLFL), 369–389 (IIPG…MVFL), 396–416 (LTLM…IVVI), 440–460 (IGFT…PLLF), 472–492 (FAVT…TLTP), 537–557 (WLTL…WVFI), 863–883 (LGST…VLGV), 888–908 (FIHP…ALLA), 911–931 (IAGS…IGIV), 967–987 (PILM…LSTG), and 998–1018 (IGMV…TPVI).

This sequence belongs to the resistance-nodulation-cell division (RND) (TC 2.A.6) family. MdtB subfamily. Part of a tripartite efflux system composed of MdtA, MdtB and MdtC. MdtB forms a heteromultimer with MdtC.

The protein resides in the cell inner membrane. This chain is Multidrug resistance protein MdtB, found in Citrobacter koseri (strain ATCC BAA-895 / CDC 4225-83 / SGSC4696).